The sequence spans 365 residues: Probable tRNA pseudouridine synthase B (365 aa).

Aspartate 43 serves as the catalytic Nucleophile. The PUA domain occupies 209-285; sequence YPKIVVKRSA…DHIFLEADDG (77 aa). The segment at 300 to 365 is disordered; the sequence is SGSGLHKDIQ…GKERHGRDHQ (66 aa). Composition is skewed to basic and acidic residues over residues 304 to 318, 326 to 336, and 354 to 365; these read LHKD…KDTR, TGPEKTADRVW, and GGGKERHGRDHQ.

It belongs to the pseudouridine synthase TruB family. Type 2 subfamily.

The enzyme catalyses uridine(55) in tRNA = pseudouridine(55) in tRNA. Could be responsible for synthesis of pseudouridine from uracil-55 in the psi GC loop of transfer RNAs. This Thermoplasma acidophilum (strain ATCC 25905 / DSM 1728 / JCM 9062 / NBRC 15155 / AMRC-C165) protein is Probable tRNA pseudouridine synthase B.